The primary structure comprises 418 residues: Protein-lysine N-trimethyltransferase SMYD5 (418 aa).

Residues 21–352 (VSVEVRFVSS…PGEEICISYL (332 aa)) form the SET domain. The segment at 98-136 (PELCTVRKDLHQNCPHCQVMYCSAECRLAATEQYHQVLC) adopts an MYND-type zinc-finger fold. Tyrosine 351 provides a ligand contact to S-adenosyl-L-methionine. Positions 385-418 (ADEPNVTSEEEEEEEEEEEGEPEDAELGDEMTDV) are disordered.

This sequence belongs to the class V-like SAM-binding methyltransferase superfamily. As to quaternary structure, interacts with the N-CoR complex. Interacts with EHMT2 and CBX5. In terms of processing, ubiquitinated and degradaed by the proteasome in response to mild hypothermia (32 degrees Celsius), relieving repression of the SP1 gene.

Its subcellular location is the cytoplasm. It catalyses the reaction L-lysyl-[protein] + 3 S-adenosyl-L-methionine = N(6),N(6),N(6)-trimethyl-L-lysyl-[protein] + 3 S-adenosyl-L-homocysteine + 3 H(+). The catalysed reaction is L-lysyl(20)-[histone H4] + 3 S-adenosyl-L-methionine = N(6),N(6),N(6)-trimethyl-L-lysyl(20)-[histone H4] + 3 S-adenosyl-L-homocysteine + 3 H(+). The enzyme catalyses L-lysyl(36)-[histone H3] + 3 S-adenosyl-L-methionine = N(6),N(6),N(6)-trimethyl-L-lysyl(36)-[histone H3] + 3 S-adenosyl-L-homocysteine + 3 H(+). In terms of biological role, protein-lysine N-trimethyltransferase that specifically catalyzes trimethylation of 'Lys-22' of the RPL40/eL40 subunit of the 60S ribosome, thereby promoting translation elongation and protein synthesis. May also act as a histone methyltransferase in the context of histone octamers, but not on nucleosome substrates: trimethylates 'Lys-36' of histone H3 and 'Lys-20' of histone H4 to form H3K36me3 and H4K20me3, respectively. The histone methyltransferase activity, which is independent of its SET domain, is however unsure in vivo. In association with the NCoR corepressor complex, involved in the repression of toll-like receptor 4 (TLR4)-target inflammatory genes in macrophages, possibly by catalyzing the formation of H4K20me3 at the gene promoters. Plays an important role in embryonic stem (ES) cell self-renewal and differentiation. Maintains genome stability of ES cells during differentiation through regulation of heterochromatin formation and repression of endogenous repetitive DNA elements by promoting H4K20me3 marks. Acts as a regulator of the hypothermia response: its degradation in response to mild hypothermia relieves the formation of H3K36me3 at gene promoters, allowing expression of the neuroprotective gene SP1. This is Protein-lysine N-trimethyltransferase SMYD5 from Homo sapiens (Human).